The following is a 382-amino-acid chain: Lipid-A-disaccharide synthase (382 aa).

Belongs to the LpxB family.

The catalysed reaction is a lipid X + a UDP-2-N,3-O-bis[(3R)-3-hydroxyacyl]-alpha-D-glucosamine = a lipid A disaccharide + UDP + H(+). The protein operates within bacterial outer membrane biogenesis; LPS lipid A biosynthesis. In terms of biological role, condensation of UDP-2,3-diacylglucosamine and 2,3-diacylglucosamine-1-phosphate to form lipid A disaccharide, a precursor of lipid A, a phosphorylated glycolipid that anchors the lipopolysaccharide to the outer membrane of the cell. The polypeptide is Lipid-A-disaccharide synthase (Alteromonas mediterranea (strain DSM 17117 / CIP 110805 / LMG 28347 / Deep ecotype)).